A 116-amino-acid chain; its full sequence is Holo-[acyl-carrier-protein] synthase (116 aa).

Residues Asp8 and Glu50 each coordinate Mg(2+).

This sequence belongs to the P-Pant transferase superfamily. AcpS family. Mg(2+) is required as a cofactor.

It localises to the cytoplasm. The catalysed reaction is apo-[ACP] + CoA = holo-[ACP] + adenosine 3',5'-bisphosphate + H(+). In terms of biological role, transfers the 4'-phosphopantetheine moiety from coenzyme A to a Ser of acyl-carrier-protein. The polypeptide is Holo-[acyl-carrier-protein] synthase (Beutenbergia cavernae (strain ATCC BAA-8 / DSM 12333 / CCUG 43141 / JCM 11478 / NBRC 16432 / NCIMB 13614 / HKI 0122)).